The primary structure comprises 105 residues: Small ribosomal subunit protein eS24 (105 aa).

Positions 85-105 (SVIAKNEEPEEEPEEEAEDAE) are disordered. The span at 92 to 105 (EPEEEPEEEAEDAE) shows a compositional bias: acidic residues.

Belongs to the eukaryotic ribosomal protein eS24 family.

This chain is Small ribosomal subunit protein eS24, found in Methanosphaera stadtmanae (strain ATCC 43021 / DSM 3091 / JCM 11832 / MCB-3).